Consider the following 132-residue polypeptide: Long-chain acyl-CoA thioesterase FadM (132 aa).

D13 is a catalytic residue.

The protein belongs to the 4-hydroxybenzoyl-CoA thioesterase family. Homotetramer.

It carries out the reaction (3E,5Z)-tetradecadienoyl-CoA + H2O = (3E,5Z)-tetradecadienoate + CoA + H(+). It catalyses the reaction (3E,5Z)-dodecadienoyl-CoA + H2O = (3E,5Z)-dodecadienoate + CoA + H(+). The enzyme catalyses (9Z)-octadecenoyl-CoA + H2O = (9Z)-octadecenoate + CoA + H(+). The catalysed reaction is octadecanoyl-CoA + H2O = octadecanoate + CoA + H(+). It carries out the reaction hexadecanoyl-CoA + H2O = hexadecanoate + CoA + H(+). It catalyses the reaction (3S)-hydroxytetradecanoyl-CoA + H2O = (3S)-hydroxytetradecanoate + CoA + H(+). The enzyme catalyses tetradecanoyl-CoA + H2O = tetradecanoate + CoA + H(+). Functionally, long-chain acyl-CoA thioesterase that could be involved in beta-oxidation of fatty acids. Is most active with 3,5-tetradecadienoyl-CoA, a metabolite of oleic acid that is hydrolyzed during oleate beta-oxidation, but can also use other substrates such as 3,5-dodecadienoyl-CoA, 9-cis-octadecenoyl-CoA, octadecanoyl-CoA, hexadecanoyl-CoA, 3-hydroxytetradecanoyl-CoA and tetradecanoyl-CoA. This Escherichia coli (strain K12) protein is Long-chain acyl-CoA thioesterase FadM.